A 346-amino-acid chain; its full sequence is Annexin A1 (346 aa).

Serine 5 is modified (phosphoserine; by TRPM7). Glutamine 19 participates in a covalent cross-link: Isoglutamyl lysine isopeptide (Gln-Lys) (interchain with K-?). Residue tyrosine 21 is modified to Phosphotyrosine; by EGFR. Residue serine 27 is modified to Phosphoserine; by PKC. 2 positions are modified to phosphoserine: serine 34 and serine 37. 4 Annexin repeats span residues 42–113 (FDAS…ALLK), 114–185 (TPAQ…SLAK), 197–269 (DLAD…AIVK), and 273–344 (STPA…ALCG). N6-acetyllysine is present on lysine 58. 11 residues coordinate Ca(2+): glycine 59, valine 60, glutamate 62, lysine 97, leucine 100, glutamate 105, methionine 127, glycine 129, glycine 131, threonine 132, and glutamate 134. Threonine 136 is subject to Phosphothreonine. Ca(2+) is bound by residues aspartate 171, glycine 210, and arginine 213. Lysine 214 is covalently cross-linked (Glycyl lysine isopeptide (Lys-Gly) (interchain with G-Cter in SUMO1); alternate). A Glycyl lysine isopeptide (Lys-Gly) (interchain with G-Cter in SUMO2); alternate cross-link involves residue lysine 214. Residue glycine 215 coordinates Ca(2+). N6-acetyllysine is present on lysine 239. Ca(2+)-binding residues include aspartate 253, glutamate 255, and leucine 256. Lysine 257 is covalently cross-linked (Glycyl lysine isopeptide (Lys-Gly) (interchain with G-Cter in SUMO1)). Residues glutamate 261, methionine 286, glycine 288, and glycine 290 each coordinate Ca(2+). Lysine 312 bears the N6-acetyllysine mark. A disulfide bridge connects residues cysteine 324 and cysteine 343. The Ca(2+) site is built by leucine 328, glutamate 330, and threonine 331. Lysine 332 participates in a covalent cross-link: Glycyl lysine isopeptide (Lys-Gly) (interchain with G-Cter in SUMO1). Glutamate 336 lines the Ca(2+) pocket.

The protein belongs to the annexin family. As to quaternary structure, homodimer; non-covalently linked. Homodimer; linked by transglutamylation. Homodimers linked by transglutamylation are observed in placenta, but not in other tissues. Interacts with S100A11. Heterotetramer, formed by two molecules each of S100A11 and ANXA1. Interacts with DYSF. Interacts with EGFR. In terms of processing, phosphorylated by protein kinase C, EGFR and TRPM7. Phosphorylated in response to EGF treatment. Sumoylated. Post-translationally, proteolytically cleaved by cathepsin CTSG to release the active N-terminal peptide Ac2-26.

Its subcellular location is the nucleus. The protein localises to the cytoplasm. The protein resides in the cell projection. It is found in the cilium. It localises to the basolateral cell membrane. Its subcellular location is the lateral cell membrane. The protein localises to the cell membrane. The protein resides in the apical cell membrane. It is found in the membrane. It localises to the endosome membrane. Its subcellular location is the secreted. The protein localises to the extracellular space. The protein resides in the early endosome. It is found in the cytoplasmic vesicle membrane. It localises to the extracellular exosome. Its subcellular location is the cytoplasmic vesicle. The protein localises to the secretory vesicle lumen. The protein resides in the phagocytic cup. Functionally, plays important roles in the innate immune response as effector of glucocorticoid-mediated responses and regulator of the inflammatory process. Has anti-inflammatory activity. Plays a role in glucocorticoid-mediated down-regulation of the early phase of the inflammatory response. Contributes to the adaptive immune response by enhancing signaling cascades that are triggered by T-cell activation, regulates differentiation and proliferation of activated T-cells. Promotes the differentiation of T-cells into Th1 cells and negatively regulates differentiation into Th2 cells. Has no effect on unstimulated T-cells. Negatively regulates hormone exocytosis via activation of the formyl peptide receptors and reorganization of the actin cytoskeleton. Has high affinity for Ca(2+) and can bind up to eight Ca(2+) ions. Displays Ca(2+)-dependent binding to phospholipid membranes. Plays a role in the formation of phagocytic cups and phagosomes. Plays a role in phagocytosis by mediating the Ca(2+)-dependent interaction between phagosomes and the actin cytoskeleton. In terms of biological role, functions at least in part by activating the formyl peptide receptors and downstream signaling cascades. Promotes chemotaxis of granulocytes and monocytes via activation of the formyl peptide receptors. Promotes rearrangement of the actin cytoskeleton, cell polarization and cell migration. Promotes resolution of inflammation and wound healing. Acts via neutrophil N-formyl peptide receptors to enhance the release of CXCL2. The sequence is that of Annexin A1 (ANXA1) from Cavia cutleri (Guinea pig).